Consider the following 178-residue polypeptide: Hypoxanthine phosphoribosyltransferase (178 aa).

Diphosphate contacts are provided by arginine 43 and glycine 44. Glutamate 99 lines the GMP pocket. An IMP-binding site is contributed by glutamate 99. Glutamate 99 and aspartate 100 together coordinate Mg(2+). Aspartate 103 acts as the Proton acceptor in catalysis. GMP contacts are provided by residues 103–108, lysine 131, and aspartate 159; that span reads DSGNTL. IMP contacts are provided by residues 103 to 108 and lysine 131; that span reads DSGNTL. Arginine 165 serves as a coordination point for diphosphate.

Belongs to the purine/pyrimidine phosphoribosyltransferase family. In terms of assembly, homotetramer. Mg(2+) serves as cofactor.

It is found in the cytoplasm. It catalyses the reaction IMP + diphosphate = hypoxanthine + 5-phospho-alpha-D-ribose 1-diphosphate. The catalysed reaction is GMP + diphosphate = guanine + 5-phospho-alpha-D-ribose 1-diphosphate. Its pathway is purine metabolism; IMP biosynthesis via salvage pathway; IMP from hypoxanthine: step 1/1. In terms of biological role, purine salvage pathway enzyme which catalyzes the transfer of the ribosyl-5-phosphate group from 5-phospho-alpha-D-ribose 1-diphosphate (PRPP) to the N9 position of hypoxanthine to yield IMP (inosine 5'-monophosphate). To a lesser extent, can also act on guanine leading to GMP, but shows a highly less efficient activity with xanthine. The polypeptide is Hypoxanthine phosphoribosyltransferase (hpt) (Shigella flexneri).